Reading from the N-terminus, the 561-residue chain is Glutamate--tRNA ligase (561 aa).

A 'HIGH' region motif is present at residues proline 107–histidine 117.

The protein belongs to the class-I aminoacyl-tRNA synthetase family. Glutamate--tRNA ligase type 2 subfamily.

Its subcellular location is the cytoplasm. The enzyme catalyses tRNA(Glu) + L-glutamate + ATP = L-glutamyl-tRNA(Glu) + AMP + diphosphate. Functionally, catalyzes the attachment of glutamate to tRNA(Glu) in a two-step reaction: glutamate is first activated by ATP to form Glu-AMP and then transferred to the acceptor end of tRNA(Glu). This is Glutamate--tRNA ligase from Methanoculleus marisnigri (strain ATCC 35101 / DSM 1498 / JR1).